Here is a 2493-residue protein sequence, read N- to C-terminus: Non-reducing polyketide synthase pkiA (2493 aa).

An N-terminal acylcarrier protein transacylase domain (SAT) region spans residues 129–243 (PLLMMTHFVQ…VQYDENRATI (115 aa)). The active-site Nucleophile; for transacylase activity is cysteine 160. Histidine 274 (proton donor/acceptor; for transacylase activity) is an active-site residue. In terms of domain architecture, Ketosynthase family 3 (KS3) spans 401–818 (ETDIAIVGMA…GSNASMVITQ (418 aa)). Residues cysteine 567, histidine 702, and histidine 741 each act as for beta-ketoacyl synthase activity in the active site. The interval 926–1261 (CFGGQVGRSI…EYAPLLLPPY (336 aa)) is malonyl-CoA:ACP transacylase (MAT). Residues 1259 to 1387 (PPYQFERTRH…AHISMHDVRC (129 aa)) form an N-terminal hotdog fold region. The PKS/mFAS DH domain maps to 1259–1562 (PPYQFERTRH…YSRVAKSLFT (304 aa)). Histidine 1291 functions as the Proton acceptor; for dehydratase activity in the catalytic mechanism. Residues 1297-1558 (APIAPATLLL…LGLRYSRVAK (262 aa)) are product template (PT) domain. The C-terminal hotdog fold stretch occupies residues 1415–1562 (VDDILQGRNV…YSRVAKSLFT (148 aa)). The active-site Proton donor; for dehydratase activity is the aspartate 1471. Positions 1588 to 1662 (KDLVSRVKAV…DLVQAVQSAL (75 aa)) constitute a Carrier domain. O-(pantetheine 4'-phosphoryl)serine is present on serine 1622. Residues 1822 to 2063 (REYPEYGGAS…YGHVDWTDGE (242 aa)) are methyltransferase (CMeT) domain. The segment at 2128–2366 (VTGATGSLGS…TPVDVAARII (239 aa)) is NADPH-binding domain.

Requires pantetheine 4'-phosphate as cofactor.

The enzyme catalyses decanoyl-[ACP] + 4 malonyl-CoA + AH2 + S-adenosyl-L-methionine + 3 H(+) = 2,4-dihydroxy-3-methyl-6-(2-oxoundecyl)benzaldehyde + holo-[ACP] + A + S-adenosyl-L-homocysteine + 4 CO2 + 4 CoA + H2O. The protein operates within secondary metabolite biosynthesis. Non-reducing polyketide synthase; part of the pki gene cluster that mediates the biosynthesis of 2,4-dihydroxy-3-methyl-6-(2-oxoundecyl)benzaldehyde. The first step in the pathway is the generation of the decanoyl starter unit by the FAS composed of subunits pkiB and pkiC, which is then transferred directly from the FAS to the SAT domain of the non-reducing polyketide synthase pkiA. PkiA condenses the decanoyyl starter unit with 4 malonyl-CoA units and performs one methylation step to yield 2,4-dihydroxy-3-methyl-6-(2-oxoundecyl)benzaldehyde. This Emericella nidulans (strain FGSC A4 / ATCC 38163 / CBS 112.46 / NRRL 194 / M139) (Aspergillus nidulans) protein is Non-reducing polyketide synthase pkiA.